The chain runs to 227 residues: uncharacterized protein (227 aa).

3 consecutive transmembrane segments (helical) span residues 109–128 (MCNV…FAGI), 173–192 (AILL…ILLT), and 199–221 (ALRV…VMMG).

It localises to the cell membrane. This is an uncharacterized protein from Archaeoglobus fulgidus (strain ATCC 49558 / DSM 4304 / JCM 9628 / NBRC 100126 / VC-16).